We begin with the raw amino-acid sequence, 103 residues long: Pyrimidine/purine nucleoside phosphorylase (103 aa).

The protein belongs to the nucleoside phosphorylase PpnP family.

It carries out the reaction a purine D-ribonucleoside + phosphate = a purine nucleobase + alpha-D-ribose 1-phosphate. It catalyses the reaction adenosine + phosphate = alpha-D-ribose 1-phosphate + adenine. The enzyme catalyses cytidine + phosphate = cytosine + alpha-D-ribose 1-phosphate. The catalysed reaction is guanosine + phosphate = alpha-D-ribose 1-phosphate + guanine. It carries out the reaction inosine + phosphate = alpha-D-ribose 1-phosphate + hypoxanthine. It catalyses the reaction thymidine + phosphate = 2-deoxy-alpha-D-ribose 1-phosphate + thymine. The enzyme catalyses uridine + phosphate = alpha-D-ribose 1-phosphate + uracil. The catalysed reaction is xanthosine + phosphate = alpha-D-ribose 1-phosphate + xanthine. In terms of biological role, catalyzes the phosphorolysis of diverse nucleosides, yielding D-ribose 1-phosphate and the respective free bases. Can use uridine, adenosine, guanosine, cytidine, thymidine, inosine and xanthosine as substrates. Also catalyzes the reverse reactions. The sequence is that of Pyrimidine/purine nucleoside phosphorylase from Shewanella baltica (strain OS223).